The primary structure comprises 47 residues: Variabilin (47 aa).

The Cell attachment site motif lies at 32–34 (RGD).

Contains 2 disulfide bonds. In terms of tissue distribution, expressed in salivary glands.

The protein resides in the secreted. Potently inhibits platelet aggregation induced by ADP (IC(50)=157 nM, complete inhibition at 514 nM). Also inhibits platelet aggregation induced by collagen and by the thrombin receptor peptide SFLLRNP. Is a potent antagonist of the fibrinogen receptor glycoprotein IIb-IIIa (ITGA2B/ITGB3) and the vitronectin receptor alpha-v/beta-3 (ITGAV/ITGB3). In Dermacentor variabilis (American dog tick), this protein is Variabilin.